A 1338-amino-acid polypeptide reads, in one-letter code: Centrosomal P4.1-associated protein (1338 aa).

Disordered stretches follow at residues 78 to 99 (QKLE…HTGF) and 190 to 211 (GLSL…TTTG). 2 positions are modified to phosphoserine: S260 and S317. The tract at residues 320-395 (VANIEERPIK…FTNAKSKFQK (76 aa)) is alpha/beta-tubulin binding. Disordered regions lie at residues 387–415 (TNAK…PLFK), 437–480 (PILK…QTGK), and 522–552 (QGKD…ESES). Residues 401 to 410 (LVTNQSTSED) show a composition bias toward polar residues. A Phosphoserine modification is found at S541. Residues 542–551 (PIRETMKESE) show a composition bias toward basic and acidic residues. 2 positions are modified to phosphoserine; by PLK2: S590 and S596. Disordered stretches follow at residues 612–790 (HRMS…LSMS), 846–903 (VKRG…DNAR), and 1088–1158 (TQVE…HPDG). A compositionally biased stretch (basic and acidic residues) spans 636 to 651 (NRSEDLDHTAREKESE). Residues 680 to 690 (QKSTSENQTEW) show a composition bias toward polar residues. A compositionally biased stretch (basic and acidic residues) spans 718 to 765 (STEDRERGISSREDSPQVCDDKGPFKDTRTQEDKRRDVDLDLSDKDYS). The residue at position 760 (S760) is a Phosphoserine. Over residues 781–790 (PSRSSSLSMS) the composition is skewed to low complexity. The interval 896-1338 (QPPGDNARSQ…EGNVLMDTEL (443 aa)) is interaction with STIL.

The protein belongs to the TCP10 family. As to quaternary structure, forms homodimers. Associates with microtubules plus ends; binds to beta-tubulin subunits exposed on microtubule outer surface at its distal tip; also associates with microtubule lattice. Associated with the gamma-tubulin complex. Interacts with the head domain of EPB41. Interacts with LYST. Interacts with CEP152 (via C-terminus). Interacts with STIL. Forms a complex with STIL and SASS6. In terms of processing, phosphorylation at Ser-590 and Ser-596 by PLK2 is required for procentriole formation and centriole elongation. Phosphorylation by PLK2 oscillates during the cell cycle: it increases at G1/S transition and decreases during the exit from mitosis. Phosphorylation at Ser-596 is also mediated by PLK4 but is not a critical step in PLK4 function in procentriole assembly.

It is found in the cytoplasm. Its subcellular location is the cytoskeleton. The protein localises to the microtubule organizing center. It localises to the centrosome. The protein resides in the centriole. Functionally, plays an important role in cell division and centrosome function by participating in centriole duplication. Inhibits microtubule nucleation from the centrosome. Involved in the regulation of slow processive growth of centriolar microtubules. Acts as microtubule plus-end tracking protein that stabilizes centriolar microtubules and inhibits microtubule polymerization and extension from the distal ends of centrioles. Required for centriole elongation and for STIL-mediated centriole amplification. Required for the recruitment of CEP295 to the proximal end of new-born centrioles at the centriolar microtubule wall during early S phase in a PLK4-dependent manner. May be involved in the control of centriolar-microtubule growth by acting as a regulator of tubulin release. The protein is Centrosomal P4.1-associated protein (CPAP) of Pan troglodytes (Chimpanzee).